The following is a 184-amino-acid chain: Outer-membrane lipoprotein carrier protein (184 aa).

A signal peptide spans 1–19; that stretch reads MRAFLKILMVLIFMSVAYA.

This sequence belongs to the LolA family. Monomer.

Its subcellular location is the periplasm. Functionally, participates in the translocation of lipoproteins from the inner membrane to the outer membrane. Only forms a complex with a lipoprotein if the residue after the N-terminal Cys is not an aspartate (The Asp acts as a targeting signal to indicate that the lipoprotein should stay in the inner membrane). In Helicobacter pylori (strain HPAG1), this protein is Outer-membrane lipoprotein carrier protein.